A 530-amino-acid polypeptide reads, in one-letter code: Glutamate--cysteine ligase (530 aa).

The protein belongs to the glutamate--cysteine ligase type 1 family. Type 1 subfamily.

It catalyses the reaction L-cysteine + L-glutamate + ATP = gamma-L-glutamyl-L-cysteine + ADP + phosphate + H(+). The protein operates within sulfur metabolism; glutathione biosynthesis; glutathione from L-cysteine and L-glutamate: step 1/2. The protein is Glutamate--cysteine ligase of Saccharophagus degradans (strain 2-40 / ATCC 43961 / DSM 17024).